Reading from the N-terminus, the 461-residue chain is Piperine synthase (461 aa).

Active-site proton acceptor residues include histidine 168 and aspartate 387. Positions 459 to 461 match the Microbody targeting signal motif; sequence SRM.

Belongs to the plant acyltransferase family. In terms of assembly, monomer. As to expression, confined to immature fruits perisperm. Also detectable in roots.

Its subcellular location is the cytoplasm. The enzyme catalyses piperidine + (E,E)-piperoyl-CoA = piperine + CoA + H(+). It carries out the reaction pyrrolidine + (E,E)-piperoyl-CoA = piperyline + CoA + H(+). It catalyses the reaction (E,E)-piperoyl-CoA + 2-methylpropan-1-amine = (E,E)-piperlonguminine + CoA + H(+). Its pathway is aromatic compound metabolism. In terms of biological role, involved in the biosynthesis of aromatic piperamides natural products such as piperine (1-piperoyl-piperidine), the pungent principle contributing, together with several terpenoids, to the aromatic properties of black pepper fruits, and displaying numerous pharmacological activities such as antiproliferative, antitumor, antiangiogenesis, antioxidant, antidiabetic, antiobesity, cardioprotective, antimicrobial, antiaging, and immunomodulatory effects. Mediates mainly the conversion of piperidine and piperoyl-CoA to piperine. Can also use pyrrolidine and isobutylamine as acceptors and 3,4-methylenedioxycinnamoyl-CoA as an alternative CoA-donor with a lower efficiency. The polypeptide is Piperine synthase (Piper nigrum (Black pepper)).